The chain runs to 196 residues: Peptidyl-tRNA hydrolase (196 aa).

Tyrosine 18 serves as a coordination point for tRNA. The active-site Proton acceptor is the histidine 23. Positions 69, 71, and 117 each coordinate tRNA.

It belongs to the PTH family. In terms of assembly, monomer.

Its subcellular location is the cytoplasm. The catalysed reaction is an N-acyl-L-alpha-aminoacyl-tRNA + H2O = an N-acyl-L-amino acid + a tRNA + H(+). Its function is as follows. Hydrolyzes ribosome-free peptidyl-tRNAs (with 1 or more amino acids incorporated), which drop off the ribosome during protein synthesis, or as a result of ribosome stalling. Catalyzes the release of premature peptidyl moieties from peptidyl-tRNA molecules trapped in stalled 50S ribosomal subunits, and thus maintains levels of free tRNAs and 50S ribosomes. This chain is Peptidyl-tRNA hydrolase, found in Vibrio cholerae serotype O1 (strain ATCC 39315 / El Tor Inaba N16961).